The chain runs to 89 residues: Small ribosomal subunit protein bS20 (89 aa).

A compositionally biased stretch (basic residues) spans 1–12 (MANHKSAIKRHR). Residues 1–26 (MANHKSAIKRHRQSVERAGRNRAART) form a disordered region.

Belongs to the bacterial ribosomal protein bS20 family.

Binds directly to 16S ribosomal RNA. In Desulfovibrio desulfuricans (strain ATCC 27774 / DSM 6949 / MB), this protein is Small ribosomal subunit protein bS20.